A 119-amino-acid chain; its full sequence is UPF0102 protein FN1370 (119 aa).

This sequence belongs to the UPF0102 family.

The chain is UPF0102 protein FN1370 from Fusobacterium nucleatum subsp. nucleatum (strain ATCC 25586 / DSM 15643 / BCRC 10681 / CIP 101130 / JCM 8532 / KCTC 2640 / LMG 13131 / VPI 4355).